We begin with the raw amino-acid sequence, 269 residues long: Cytochrome c oxidase subunit 3 (269 aa).

7 consecutive transmembrane segments (helical) span residues 21 to 41 (PWPITVSFALMSFALSLGLTM), 45 to 65 (IVGNSVLFTSIILVLYSMTMW), 90 to 110 (GFLLFVVSEILIFAGIFWAYF), 127 to 147 (VGITAIGATELPLLNTIILLA), 167 to 187 (ALNGLFITLWLIVIFVVCQYI), 204 to 224 (VFFAGTGLHFLHMGMLIIMLA), and 247 to 267 (ILYLHVLDVIWLFLYIVMYWW).

This sequence belongs to the cytochrome c oxidase subunit 3 family. As to quaternary structure, component of the cytochrome c oxidase (complex IV, CIV), a multisubunit enzyme composed of a catalytic core of 3 subunits and several supernumerary subunits. The complex exists as a monomer or a dimer and forms supercomplexes (SCs) in the inner mitochondrial membrane with ubiquinol-cytochrome c oxidoreductase (cytochrome b-c1 complex, complex III, CIII).

The protein resides in the mitochondrion inner membrane. The catalysed reaction is 4 Fe(II)-[cytochrome c] + O2 + 8 H(+)(in) = 4 Fe(III)-[cytochrome c] + 2 H2O + 4 H(+)(out). Component of the cytochrome c oxidase, the last enzyme in the mitochondrial electron transport chain which drives oxidative phosphorylation. The respiratory chain contains 3 multisubunit complexes succinate dehydrogenase (complex II, CII), ubiquinol-cytochrome c oxidoreductase (cytochrome b-c1 complex, complex III, CIII) and cytochrome c oxidase (complex IV, CIV), that cooperate to transfer electrons derived from NADH and succinate to molecular oxygen, creating an electrochemical gradient over the inner membrane that drives transmembrane transport and the ATP synthase. Cytochrome c oxidase is the component of the respiratory chain that catalyzes the reduction of oxygen to water. Electrons originating from reduced cytochrome c in the intermembrane space (IMS) are transferred via the dinuclear copper A center (CU(A)) of subunit 2 and heme A of subunit 1 to the active site in subunit 1, a binuclear center (BNC) formed by heme A3 and copper B (CU(B)). The BNC reduces molecular oxygen to 2 water molecules using 4 electrons from cytochrome c in the IMS and 4 protons from the mitochondrial matrix. The sequence is that of Cytochrome c oxidase subunit 3 (COX3) from Wickerhamomyces canadensis (Yeast).